The following is a 147-amino-acid chain: MALKRIHKELNDLARDPPAQCSAGPVGDDMFHWQATIMGPNDSPYQGGVFFLTIHFPTDYPFKPPKVAFTTRIYHPNINSNGSICLDILRSQWSPALTISKVLLSICSLLCDPNPDDPLVPEIARIYKTDRDKYNRISREWTQKYAM.

The 147-residue stretch at 1–147 (MALKRIHKEL…SREWTQKYAM (147 aa)) folds into the UBC core domain. Cys85 (glycyl thioester intermediate) is an active-site residue.

The protein belongs to the ubiquitin-conjugating enzyme family. As to quaternary structure, interacts with SCF (SKP1-CUL1-F-box protein) E3 ubiquitin ligase complex. Interacts with CNOT4 (via RING domain). Interacts with E3 ubiquitin-protein ligases CBLC, PJA1 and PJA2. Interacts with PDZRN3. Interacts with PPP1R11. Interacts with E3 ubiquitin-protein ligase PHF7; the interaction inhibits cleavage of PHF7 and promotes association of the complex with the nucleosome core particle.

It carries out the reaction S-ubiquitinyl-[E1 ubiquitin-activating enzyme]-L-cysteine + [E2 ubiquitin-conjugating enzyme]-L-cysteine = [E1 ubiquitin-activating enzyme]-L-cysteine + S-ubiquitinyl-[E2 ubiquitin-conjugating enzyme]-L-cysteine.. It catalyses the reaction S-ubiquitinyl-[E1 ubiquitin-activating enzyme]-L-cysteine + [acceptor protein]-L-lysine = [E1 ubiquitin-activating enzyme]-L-cysteine + N(6)-monoubiquitinyl-[acceptor protein]-L-lysine.. Its pathway is protein modification; protein ubiquitination. Accepts ubiquitin from the E1 complex and catalyzes its covalent attachment to other proteins. In vitro catalyzes 'Lys-48'-linked polyubiquitination. Mediates the selective degradation of short-lived and abnormal proteins. Functions in the E6/E6-AP-induced ubiquitination of p53/TP53. Mediates ubiquitination of PEX5 and SQSTM1 and autoubiquitination of STUB1 and TRAF6. Involved in the signal-induced conjugation and subsequent degradation of NFKBIA, FBXW2-mediated GCM1 ubiquitination and degradation, MDM2-dependent degradation of p53/TP53 and the activation of MAVS in the mitochondria by RIGI in response to viral infection. Essential for viral activation of IRF3. The polypeptide is Ubiquitin-conjugating enzyme E2 D2 (UBE2D2) (Sus scrofa (Pig)).